The chain runs to 262 residues: Acyl-[acyl-carrier-protein]--UDP-N-acetylglucosamine O-acyltransferase (262 aa).

It belongs to the transferase hexapeptide repeat family. LpxA subfamily. As to quaternary structure, homotrimer.

It is found in the cytoplasm. The catalysed reaction is a (3R)-hydroxyacyl-[ACP] + UDP-N-acetyl-alpha-D-glucosamine = a UDP-3-O-[(3R)-3-hydroxyacyl]-N-acetyl-alpha-D-glucosamine + holo-[ACP]. It participates in glycolipid biosynthesis; lipid IV(A) biosynthesis; lipid IV(A) from (3R)-3-hydroxytetradecanoyl-[acyl-carrier-protein] and UDP-N-acetyl-alpha-D-glucosamine: step 1/6. In terms of biological role, involved in the biosynthesis of lipid A, a phosphorylated glycolipid that anchors the lipopolysaccharide to the outer membrane of the cell. The chain is Acyl-[acyl-carrier-protein]--UDP-N-acetylglucosamine O-acyltransferase from Klebsiella pneumoniae (strain 342).